An 816-amino-acid chain; its full sequence is tRNA(Met) cytidine acetyltransferase TmcA (816 aa).

Residues Gln-265 and Arg-439 each contribute to the ATP site. The N-acetyltransferase domain maps to 469–664 (ELIRKMEVYL…YTAIVIKPIS (196 aa)). Acetyl-CoA is bound by residues 589 to 591 (IAT), Glu-629, and Arg-636.

This sequence belongs to the TmcA family.

It localises to the cytoplasm. It carries out the reaction cytidine(34) in elongator tRNA(Met) + acetyl-CoA + ATP + H2O = N(4)-acetylcytidine(34) in elongator tRNA(Met) + ADP + phosphate + CoA + H(+). It catalyses the reaction a cytidine in RNA + acetyl-CoA + ATP + H2O = an N(4)-acetylcytidine in RNA + ADP + phosphate + CoA + H(+). The enzyme catalyses a cytidine in tRNA + acetyl-CoA + ATP + H2O = an N(4)-acetylcytidine in tRNA + ADP + phosphate + CoA + H(+). The catalysed reaction is a cytidine in mRNA + acetyl-CoA + ATP + H2O = an N(4)-acetylcytidine in mRNA + ADP + phosphate + CoA + H(+). Catalyzes the formation of N(4)-acetylcytidine (ac(4)C) at the wobble position of tRNA(Met), by using acetyl-CoA as an acetyl donor and ATP (or GTP). In terms of biological role, catalyzes the formation of 233 N(4)-acetylcytidine (ac(4)C) sites in RNA, on the middle C of a CCG motif. Modifications are found in rRNA, ncRNA, mRNA and tRNA. More acetylation is observed at 85 than at 65 or 75 degrees Celsius. In Pyrococcus furiosus (strain ATCC 43587 / DSM 3638 / JCM 8422 / Vc1), this protein is tRNA(Met) cytidine acetyltransferase TmcA.